Reading from the N-terminus, the 137-residue chain is Phosphoribosyl-AMP cyclohydrolase (137 aa).

Residue aspartate 84 participates in Mg(2+) binding. Cysteine 85 contributes to the Zn(2+) binding site. Residues aspartate 86 and aspartate 88 each contribute to the Mg(2+) site. The Zn(2+) site is built by cysteine 101 and cysteine 108.

Belongs to the PRA-CH family. In terms of assembly, homodimer. Requires Mg(2+) as cofactor. It depends on Zn(2+) as a cofactor.

It localises to the cytoplasm. It catalyses the reaction 1-(5-phospho-beta-D-ribosyl)-5'-AMP + H2O = 1-(5-phospho-beta-D-ribosyl)-5-[(5-phospho-beta-D-ribosylamino)methylideneamino]imidazole-4-carboxamide. The protein operates within amino-acid biosynthesis; L-histidine biosynthesis; L-histidine from 5-phospho-alpha-D-ribose 1-diphosphate: step 3/9. In terms of biological role, catalyzes the hydrolysis of the adenine ring of phosphoribosyl-AMP. In Chlorobaculum tepidum (strain ATCC 49652 / DSM 12025 / NBRC 103806 / TLS) (Chlorobium tepidum), this protein is Phosphoribosyl-AMP cyclohydrolase.